Reading from the N-terminus, the 339-residue chain is RNA polymerase II holoenzyme cyclin-like subunit (339 aa).

A disordered region spans residues 48–67 (PNSADSSNGNAANNGGGNGR). The segment covering 49–60 (NSADSSNGNAAN) has biased composition (low complexity). In terms of domain architecture, Cyclin N-terminal spans 93-194 (RIYCYFLIMK…LIEELQCYLI (102 aa)).

The protein belongs to the cyclin family. Cyclin C subfamily. As to quaternary structure, component of the SRB8-11 complex, a regulatory module of the Mediator complex.

The protein resides in the nucleus. Component of the SRB8-11 complex. The SRB8-11 complex is a regulatory module of the Mediator complex which is itself involved in regulation of basal and activated RNA polymerase II-dependent transcription. The SRB8-11 complex may be involved in the transcriptional repression of a subset of genes regulated by Mediator. It may inhibit the association of the Mediator complex with RNA polymerase II to form the holoenzyme complex. The SRB8-11 complex phosphorylates the C-terminal domain (CTD) of the largest subunit of RNA polymerase II. The sequence is that of RNA polymerase II holoenzyme cyclin-like subunit (SSN8) from Candida glabrata (strain ATCC 2001 / BCRC 20586 / JCM 3761 / NBRC 0622 / NRRL Y-65 / CBS 138) (Yeast).